Reading from the N-terminus, the 142-residue chain is Midkine-B (142 aa).

A signal peptide spans 1 to 20 (MELRAFCVILLITILAVSSQ). Disulfide bonds link Cys36–Cys60, Cys44–Cys69, Cys51–Cys73, Cys83–Cys115, and Cys93–Cys125.

The protein belongs to the pleiotrophin family. As to expression, in adults, expression is highest in the brain, eye and bone, with lower expression in the heart and lung. Not expressed in the ovary. In the tailbud stage embryo, expressed in the head and tail regions as well as in the central nervous system (CNS).

It localises to the secreted. Functionally, secreted protein that functions as a cytokine and growth factor and mediates its signal through cell-surface proteoglycan and non-proteoglycan receptors. Binds cell-surface proteoglycan receptors via their chondroitin sulfate (CS) groups. Thereby regulates many processes like inflammatory response, cell proliferation, cell adhesion, cell growth, cell survival, tissue regeneration, cell differentiation and cell migration. Inhibits mesoderm formation and promotes neural formation during development. Plays a role in development of the neuromuscular junction (NMJ). Has antibacterial activity against both Gram-positive and Gram-negative bacteria. The chain is Midkine-B (mdk-b) from Xenopus laevis (African clawed frog).